A 315-amino-acid polypeptide reads, in one-letter code: Transaldolase (315 aa).

Residue lysine 125 is the Schiff-base intermediate with substrate of the active site.

This sequence belongs to the transaldolase family. Type 1 subfamily. In terms of assembly, homodimer.

Its subcellular location is the cytoplasm. The catalysed reaction is D-sedoheptulose 7-phosphate + D-glyceraldehyde 3-phosphate = D-erythrose 4-phosphate + beta-D-fructose 6-phosphate. It functions in the pathway carbohydrate degradation; pentose phosphate pathway; D-glyceraldehyde 3-phosphate and beta-D-fructose 6-phosphate from D-ribose 5-phosphate and D-xylulose 5-phosphate (non-oxidative stage): step 2/3. Its function is as follows. Transaldolase is important for the balance of metabolites in the pentose-phosphate pathway. The polypeptide is Transaldolase (Leptothrix cholodnii (strain ATCC 51168 / LMG 8142 / SP-6) (Leptothrix discophora (strain SP-6))).